The following is an 849-amino-acid chain: Probable ATP-dependent RNA helicase ddx20 (849 aa).

The disordered stretch occupies residues 9-39 (FSNPMNSNSSNNIENNNNSNNNNNNFKNNFK). The Q motif motif lies at 55–83 (ITFSELLLQKEVLKGLEDGGYQRPSPIQL). Residues Arg-77, Gln-82, 99 to 106 (AKSGTGKT), and 102 to 107 (GTGKTI) each bind ATP. The Helicase ATP-binding domain maps to 86–319 (IPLGISGVDL…KLYMNNENLV (234 aa)). The DEAD box signature appears at 255-258 (DEAD). A Helicase C-terminal domain is found at 355–499 (KCKSLVLVLE…QIENENENEN (145 aa)). Disordered stretches follow at residues 480–504 (QQQQ…NNNE), 572–644 (INEN…ENDN), 667–737 (SNNN…YPHY), and 761–817 (NNYN…NNPY). 3 stretches are compositionally biased toward acidic residues: residues 583–595 (NEDE…EDDY), 604–615 (EDEEEEQEEDDY), and 624–644 (EEEE…ENDN). 2 stretches are compositionally biased toward low complexity: residues 667–687 (SNNN…NNHY) and 696–720 (KNSI…SQSN).

Belongs to the DEAD box helicase family. DDX20 subfamily. Part of the core SMN complex.

Its subcellular location is the cytoplasm. It localises to the nucleus. It catalyses the reaction ATP + H2O = ADP + phosphate + H(+). In terms of biological role, the SMN complex catalyzes the assembly of small nuclear ribonucleoproteins (snRNPs), the building blocks of the spliceosome, and thereby plays an important role in the splicing of cellular pre-mRNAs. Most spliceosomal snRNPs contain a common set of Sm proteins SNRPB, SNRPD1, SNRPD2, SNRPD3, SNRPE, SNRPF and SNRPG that assemble in a heptameric protein ring on the Sm site of the small nuclear RNA to form the core snRNP (Sm core). In the cytosol, the Sm proteins SNRPD1, SNRPD2, SNRPE, SNRPF and SNRPG are trapped in an inactive 6S pICln-Sm complex by the chaperone CLNS1A that controls the assembly of the core snRNP. To assemble core snRNPs, the SMN complex accepts the trapped 5Sm proteins from CLNS1A forming an intermediate. Binding of snRNA inside 5Sm triggers eviction of the SMN complex, thereby allowing binding of SNRPD3 and SNRPB to complete assembly of the core snRNP. May also play a role in the metabolism of small nucleolar ribonucleoprotein (snoRNPs). The polypeptide is Probable ATP-dependent RNA helicase ddx20 (ddx20) (Dictyostelium discoideum (Social amoeba)).